Consider the following 702-residue polypeptide: Phosphoglycerol transferase I (702 aa).

3 consecutive transmembrane segments (helical) span residues 3–25 (WILALSLLLLLLLLVASPRLAWL), 73–95 (GYIAVFIGMVLLSLSPLVLLRVR), and 102–124 (GGGAVFGAFVVMLLVSVAVSPLY).

Belongs to the OpgB family.

The protein localises to the cell inner membrane. The catalysed reaction is a phosphatidylglycerol + a membrane-derived-oligosaccharide D-glucose = a 1,2-diacyl-sn-glycerol + a membrane-derived-oligosaccharide 6-(glycerophospho)-D-glucose.. It functions in the pathway glycan metabolism; osmoregulated periplasmic glucan (OPG) biosynthesis. Its function is as follows. Transfers a phosphoglycerol residue from phosphatidylglycerol to the membrane-bound nascent glucan backbones. The chain is Phosphoglycerol transferase I from Xanthomonas campestris pv. campestris (strain ATCC 33913 / DSM 3586 / NCPPB 528 / LMG 568 / P 25).